The following is a 214-amino-acid chain: MAELLNVKPTRMELLNLKRRIQLAKKGHKLLKDKQDALVMEFFTIYDEALQLRRELNLKMKEAFEALQMAEIDVGTLRLKEISLSVKPNREVEIRKRNVMAVPVPLIEAESFKRNAGERGYAFVSSSAKVDLVAEKFEEVLDLAVRLAEVEETLKRLAREIEVTKRRVNALEYIIIPRMEATVKFIKQRLDEMERENFFRLKRVKALIEARGGS.

This sequence belongs to the V-ATPase D subunit family. In terms of assembly, has multiple subunits with at least A(3), B(3), C, D, E, F, H, I and proteolipid K(x).

It is found in the cell membrane. Component of the A-type ATP synthase that produces ATP from ADP in the presence of a proton gradient across the membrane. The sequence is that of A-type ATP synthase subunit D from Desulfurococcus sp. (strain SY).